Consider the following 89-residue polypeptide: Small ribosomal subunit protein uS15 (89 aa).

Belongs to the universal ribosomal protein uS15 family. In terms of assembly, part of the 30S ribosomal subunit. Forms a bridge to the 50S subunit in the 70S ribosome, contacting the 23S rRNA.

One of the primary rRNA binding proteins, it binds directly to 16S rRNA where it helps nucleate assembly of the platform of the 30S subunit by binding and bridging several RNA helices of the 16S rRNA. In terms of biological role, forms an intersubunit bridge (bridge B4) with the 23S rRNA of the 50S subunit in the ribosome. The chain is Small ribosomal subunit protein uS15 from Streptococcus pyogenes serotype M2 (strain MGAS10270).